Reading from the N-terminus, the 588-residue chain is Pre-mRNA 3'-end-processing factor FIP1 (588 aa).

Basic and acidic residues predominate over residues 1-10 (MSAGEVERLV). Disordered stretches follow at residues 1–81 (MSAG…EDDV), 223–291 (QGRT…ESPD), and 334–588 (VDNN…TPAE). The tract at residues 1–96 (MSAGEVERLV…DIKTGAPQYG (96 aa)) is sufficient for interaction with PAPOLA. A necessary for stimulating PAPOLA activity region spans residues 1 to 341 (MSAGEVERLV…TAVDNNFSKP (341 aa)). Composition is skewed to acidic residues over residues 19-40 (GDEE…EEEN) and 66-80 (TEDD…DEDD). Phosphoserine is present on residues serine 70, serine 72, and serine 74. The sufficient for interaction with CPSF4 stretch occupies residues 122–228 (KGVDLDAPGS…FKVQQGRTGN (107 aa)). A compositionally biased stretch (low complexity) spans 259-270 (STSSQSQTSTAS). Basic and acidic residues predominate over residues 280 to 291 (WQDRYGRAESPD). Serine 289 is subject to Phosphoserine. Residues 340–398 (KPPPFFPPGAPPTHLPPPPFLPPPPTVSTAPPLIPPPGIPITVPPPGFPPPPGAPPPSL) are compositionally biased toward pro residues. Tyrosine 420 bears the Phosphotyrosine mark. Residues 437–588 (SLVDTSKQWD…QESTEATPAE (152 aa)) form a sufficient for interaction with CPSF1 and CSTF3 region. Positions 448-486 (YARREKDRDRERDRDRERDRDRDRERERTRERERERDHS) are enriched in basic and acidic residues. The tract at residues 451–484 (REKDRDRERDRDRERDRDRDRERERTRERERERD) is arg/Asp/Glu-rich domain. Phosphoserine is present on serine 486. Residue threonine 488 is modified to Phosphothreonine. 2 positions are modified to phosphoserine: serine 490 and serine 494. Residues 495–522 (DEERYRYREYAERGYERHRASREKEERH) are compositionally biased toward basic and acidic residues. A compositionally biased stretch (basic residues) spans 536 to 545 (KSSRSNSRRR). Serine 548 bears the Phosphoserine mark. The segment covering 554-564 (HRRHKHKKSKR) has biased composition (basic residues).

The protein belongs to the FIP1 family. As to quaternary structure, component of the cleavage and polyadenylation specificity factor (CPSF) complex, composed of CPSF1, CPSF2, CPSF3, CPSF4 and FIP1L1. Found in a complex with CPSF1, FIP1L1 and PAPOLA. Interacts with CPSF1, CPSF4, CSTF2 and CSTF3. Interacts with AHCYL1 (when phosphorylated); the interaction is direct and associates AHCYL1 with the CPSF complex and RNA. Interacts with PAPOLA; the interaction seems to be increased by the interaction with AHCYL1. Interacts with NUDT21/CPSF5; this interaction occurs in a RNA sequence-specific manner. Interacts (preferentially via unphosphorylated form and Arg/Glu/Asp-rich domain) with CPSF6 (via Arg/Ser-rich domain); this interaction mediates, at least in part, the interaction between the CFIm and CPSF complexes and may be inhibited by CPSF6 hyper-phosphorylation. Interacts (preferentially via unphosphorylated form and Arg/Asp/Glu-rich domain) with CPSF7 (via Arg/Ser-rich domain); this interaction mediates, at least in part, the interaction between the CFIm and CPSF complexes and may be inhibited by CPSF7 hyper-phosphorylation.

It is found in the nucleus. Component of the cleavage and polyadenylation specificity factor (CPSF) complex that plays a key role in pre-mRNA 3'-end formation, recognizing the AAUAAA signal sequence and interacting with poly(A) polymerase and other factors to bring about cleavage and poly(A) addition. FIP1L1 contributes to poly(A) site recognition and stimulates poly(A) addition. Binds to U-rich RNA sequence elements surrounding the poly(A) site. May act to tether poly(A) polymerase to the CPSF complex. This chain is Pre-mRNA 3'-end-processing factor FIP1 (FIP1L1), found in Pongo abelii (Sumatran orangutan).